We begin with the raw amino-acid sequence, 1402 residues long: Phospholipid-transporting ATPase dnf2 (1402 aa).

Helical transmembrane passes span 109–129, 135–155, 457–477, and 501–521; these read FQNVANLFFLFLVILQSISIF, PGLAAVPLIVVVGITAVKDAI, LNFIILFSMCFVCAVVEGIAW, and VVTFFTGVILFQNLVPISLYI. Asp-569 functions as the 4-aspartylphosphate intermediate in the catalytic mechanism. Asp-569, Lys-570, Thr-571, Glu-700, Phe-741, Ser-743, Lys-746, Lys-764, Arg-799, Thr-800, Thr-879, Gly-880, Asp-881, Arg-986, and Lys-992 together coordinate ATP. Residue Asp-569 coordinates Mg(2+). Thr-571 provides a ligand contact to Mg(2+). Residue Asp-1012 coordinates Mg(2+). ATP-binding residues include Asn-1015 and Asp-1016. Asp-1016 is a Mg(2+) binding site. A run of 6 helical transmembrane segments spans residues 1066–1086, 1101–1121, 1151–1171, 1193–1213, 1218–1238, and 1260–1280; these read VAEMVNNFFYKSVVWTFTLFW, YTYVMLFNLIFSSLPVIVMGV, IFIGYMLDGFYQSVICFFFSF, LGVYVAAPTIMVVDTYVILNQ, VFSIGLWALSCLTFWFWTGVY, and FWAVLCGTIVSCLFPKFLFMT. Lys-1275 is an a 1,2-diacyl-sn-glycero-3-phospho-L-serine binding site.

This sequence belongs to the cation transport ATPase (P-type) (TC 3.A.3) family. Type IV subfamily. Mg(2+) serves as cofactor.

The protein resides in the cell membrane. Its subcellular location is the endoplasmic reticulum membrane. The catalysed reaction is ATP + H2O + phospholipidSide 1 = ADP + phosphate + phospholipidSide 2.. It catalyses the reaction a 1,2-diacyl-sn-glycero-3-phosphoethanolamine(out) + ATP + H2O = a 1,2-diacyl-sn-glycero-3-phosphoethanolamine(in) + ADP + phosphate + H(+). The enzyme catalyses a 1,2-diacyl-sn-glycero-3-phosphocholine(out) + ATP + H2O = a 1,2-diacyl-sn-glycero-3-phosphocholine(in) + ADP + phosphate + H(+). It carries out the reaction a beta-D-glucosyl-(1&lt;-&gt;1')-N-acylsphing-4-enine(out) + ATP + H2O = a beta-D-glucosyl-(1&lt;-&gt;1')-N-acylsphing-4-enine(in) + ADP + phosphate + H(+). The catalysed reaction is a 1,2-diacyl-sn-glycero-3-phospho-L-serine(out) + ATP + H2O = a 1,2-diacyl-sn-glycero-3-phospho-L-serine(in) + ADP + phosphate + H(+). Catalytic component of a P4-ATPase flippase complex which catalyzes the hydrolysis of ATP coupled to the transport of glucosylceramide, phosphatidylcholine, phosphatidylethanolamine, and small amounts of phosphatidylserine from the lumenal to the cytosolic leaflet of the cell membrane and ensures the maintenance of asymmetric distribution of phospholipids. This Schizosaccharomyces pombe (strain 972 / ATCC 24843) (Fission yeast) protein is Phospholipid-transporting ATPase dnf2.